Reading from the N-terminus, the 105-residue chain is Large ribosomal subunit protein uL24 (105 aa).

Belongs to the universal ribosomal protein uL24 family. In terms of assembly, part of the 50S ribosomal subunit.

One of two assembly initiator proteins, it binds directly to the 5'-end of the 23S rRNA, where it nucleates assembly of the 50S subunit. In terms of biological role, one of the proteins that surrounds the polypeptide exit tunnel on the outside of the subunit. The polypeptide is Large ribosomal subunit protein uL24 (Mycobacterium tuberculosis (strain CDC 1551 / Oshkosh)).